The following is a 166-amino-acid chain: 6,7-dimethyl-8-ribityllumazine synthase (166 aa).

Residues Phe-24, Ala-58–Glu-60, and Ala-82–Val-84 contribute to the 5-amino-6-(D-ribitylamino)uracil site. Glu-87–Thr-88 lines the (2S)-2-hydroxy-3-oxobutyl phosphate pocket. The active-site Proton donor is the His-90. Asn-115 is a 5-amino-6-(D-ribitylamino)uracil binding site. (2S)-2-hydroxy-3-oxobutyl phosphate is bound at residue Arg-129.

It belongs to the DMRL synthase family.

The catalysed reaction is (2S)-2-hydroxy-3-oxobutyl phosphate + 5-amino-6-(D-ribitylamino)uracil = 6,7-dimethyl-8-(1-D-ribityl)lumazine + phosphate + 2 H2O + H(+). The protein operates within cofactor biosynthesis; riboflavin biosynthesis; riboflavin from 2-hydroxy-3-oxobutyl phosphate and 5-amino-6-(D-ribitylamino)uracil: step 1/2. Functionally, catalyzes the formation of 6,7-dimethyl-8-ribityllumazine by condensation of 5-amino-6-(D-ribitylamino)uracil with 3,4-dihydroxy-2-butanone 4-phosphate. This is the penultimate step in the biosynthesis of riboflavin. This is 6,7-dimethyl-8-ribityllumazine synthase from Cupriavidus necator (strain ATCC 17699 / DSM 428 / KCTC 22496 / NCIMB 10442 / H16 / Stanier 337) (Ralstonia eutropha).